The following is a 364-amino-acid chain: Coproporphyrin III ferrochelatase (364 aa).

Residues arginine 29 and tyrosine 118 each contribute to the Fe-coproporphyrin III site. Positions 169 and 250 each coordinate Fe(2+).

This sequence belongs to the ferrochelatase family.

The protein resides in the cytoplasm. The catalysed reaction is Fe-coproporphyrin III + 2 H(+) = coproporphyrin III + Fe(2+). It functions in the pathway porphyrin-containing compound metabolism; protoheme biosynthesis. Involved in coproporphyrin-dependent heme b biosynthesis. Catalyzes the insertion of ferrous iron into coproporphyrin III to form Fe-coproporphyrin III. The sequence is that of Coproporphyrin III ferrochelatase from Streptococcus pneumoniae (strain ATCC 700669 / Spain 23F-1).